The following is a 762-amino-acid chain: MTNRYHPYRGRELLNSAIDHVVGRWNDADDVNKELEKLRADVDTYKTKFRNLELTRNATDTINVNITHAVEPTETEQTPGVVPQPTTVLSTSIEDYDRSGNEYRRLIGSLKYDDIVKSIYALRERMVYDRDALLERARTQFANPGFLEITSSHIQDALGNTQYKDWKMDTTIKIFSIAKHRIYAHMNREVRLIQQEPEPIDARLKFITTIYPSFWFKELIERGLQEDYNDVLYVEQKNLSLIDGANRSELAKAQSWAPDIHYLISRMCSSLCMVPFIPLTGNNMNHAVYTDTQLLIHYAAFSNPSLVNYKEMLKDEFAYVRDHKSALFRAFETTCIKFKKYKDKLAYKRQGTVVAPTAVNINGTPVEGARGPTPVPPEIMDNLLPFLIDNIIRYRAEQREEAARGSRSIMIERDSPIGRFINFNNKSARELESLVKKLTRDYAMSEREVSLKGLSGQELPVLDFTRTLFTQMMTAAMTCNLMANRYTFFDRVINLVDETTPTPRKDVLYTPSLAAFPGALFYTLMYDQRHPLTPGTSNSSASPYNIAEYATDPVRRNLYSWMKNFFRLVPGIKASKMNTKVYGLAGKYKPNSMPSCEGPGNPSDIKEMMKGLRFINLDTMIQFSNNNKQACNMVLADYLTKIQKTELIEDLSDFYGYMFDLTPPSQGVKLIKNDQFVLPDFNAGNFARFSSAPIAYYIETIKIEERETQRENYRSSYRSDEGFTSLFAGLLEQQQRPRVAAAAPPPPPQPPAAAVPTTQAST.

The disordered stretch occupies residues Q734–T762. Residues A743–A753 are compositionally biased toward pro residues.

This is an uncharacterized protein from Ostreid herpesvirus 1 (isolate France) (OsHV-1).